A 429-amino-acid polypeptide reads, in one-letter code: Serine--tRNA ligase (429 aa).

235-237 (TAE) provides a ligand contact to L-serine. ATP is bound at residue 266-268 (RSE). L-serine is bound at residue Glu-289. 353–356 (EISS) serves as a coordination point for ATP. Ser-389 is a binding site for L-serine.

It belongs to the class-II aminoacyl-tRNA synthetase family. Type-1 seryl-tRNA synthetase subfamily. Homodimer. The tRNA molecule binds across the dimer.

The protein resides in the cytoplasm. It carries out the reaction tRNA(Ser) + L-serine + ATP = L-seryl-tRNA(Ser) + AMP + diphosphate + H(+). The catalysed reaction is tRNA(Sec) + L-serine + ATP = L-seryl-tRNA(Sec) + AMP + diphosphate + H(+). Its pathway is aminoacyl-tRNA biosynthesis; selenocysteinyl-tRNA(Sec) biosynthesis; L-seryl-tRNA(Sec) from L-serine and tRNA(Sec): step 1/1. In terms of biological role, catalyzes the attachment of serine to tRNA(Ser). Is also able to aminoacylate tRNA(Sec) with serine, to form the misacylated tRNA L-seryl-tRNA(Sec), which will be further converted into selenocysteinyl-tRNA(Sec). The protein is Serine--tRNA ligase of Histophilus somni (strain 129Pt) (Haemophilus somnus).